A 163-amino-acid chain; its full sequence is Cytochrome c-type biogenesis protein CcmE (163 aa).

Over 1–7 (MTRKQRR) the chain is Cytoplasmic. A helical; Signal-anchor for type II membrane protein transmembrane segment spans residues 8-28 (LVFIGTCGAVLAVALGLVLWA). Residues 29-163 (MSGTIVFFRS…RTASGEARAP (135 aa)) are Periplasmic-facing. Heme-binding residues include His-122 and Tyr-126. The tract at residues 134–163 (ALKKSGRWQEGAGHPAPAPPRTASGEARAP) is disordered.

Belongs to the CcmE/CycJ family.

Its subcellular location is the cell inner membrane. In terms of biological role, heme chaperone required for the biogenesis of c-type cytochromes. Transiently binds heme delivered by CcmC and transfers the heme to apo-cytochromes in a process facilitated by CcmF and CcmH. The chain is Cytochrome c-type biogenesis protein CcmE from Methylobacterium sp. (strain 4-46).